The following is a 339-amino-acid chain: DNA-directed RNA polymerase RPB7 homolog (339 aa).

This sequence belongs to the Asfivirus DNA-directed RNA polymerase RPB7 homolog family. Part of the viral DNA-directed RNA polymerase that consists of 8 polII-like subunits (RPB1, RPB2, RPB3, RPB5, RPB6, RPB7, RPB9, RPB10), a capping enzyme and a termination factor.

It localises to the host cytoplasm. The protein resides in the virion. Functionally, component of the DNA-directed RNA polymerase (RNAP) that catalyzes the transcription in the cytoplasm of viral DNA into RNA using the four ribonucleoside triphosphates as substrates. This African swine fever virus (strain Badajoz 1971 Vero-adapted) (Ba71V) protein is DNA-directed RNA polymerase RPB7 homolog.